The primary structure comprises 783 residues: Ras and Rab interactor 1 (783 aa).

Residue Met1 is modified to N-acetylmethionine. Residues Met1 to Gly53 form a disordered region. Phosphoserine occurs at positions 3 and 16. Tyr36 is subject to Phosphotyrosine; by ABL1 and ABL2. The SH2 domain maps to Trp69 to Arg163. Phosphoserine occurs at positions 210, 258, 333, and 337. Disordered stretches follow at residues Ser250–Pro282 and Tyr295–Arg342. Residues Leu257–Val269 show a composition bias toward pro residues. Positions Gly294–Arg727 are ras and 14-3-3 protein binding region. Over residues Gly317–Pro334 the composition is skewed to low complexity. Ser351 bears the Phosphoserine; by PKD/PRKD1 mark. The VPS9 domain occupies Leu456 to Leu598. Phosphoserine is present on residues Ser609 and Ser611. In terms of domain architecture, Ras-associating spans Phe624 to Trp706. Omega-N-methylarginine is present on Arg692. Residues Thr709–Glu783 form a disordered region. Residues Gln762–Glu772 are compositionally biased toward low complexity.

Belongs to the RIN (Ras interaction/interference) family. Interacts with the GTP-bound form of Ras proteins (NRAS, HRAS and KRAS). This interaction prevents the association between RAF1 and Ras. Interacts with 14-3-3 proteins YWHAB, YWHAE and YWHAZ when phosphorylated on Ser-351. Interacts with the SH3 domain of ABL1 and ABL2. Interacts with RAB5A. The interaction with Ras is probably regulated and antagonized by the interaction with 14-3-3 proteins. The interaction with 14-3-3 proteins is regulated by phosphorylation on Ser-351. Post-translationally, phosphorylated on tyrosine residues by ABL1 and ABL2. Phosphorylation at Ser-351 by PRKD1 induces interaction with 14-3-3 proteins. Expressed in all tissues examined with high levels in brain, placenta and pancreas.

It is found in the cytoplasm. The protein resides in the membrane. Its subcellular location is the cytoskeleton. In terms of biological role, ras effector protein, which may serve as an inhibitory modulator of neuronal plasticity in aversive memory formation. Can affect Ras signaling at different levels. First, by competing with RAF1 protein for binding to activated Ras. Second, by enhancing signaling from ABL1 and ABL2, which regulate cytoskeletal remodeling. Third, by activating RAB5A, possibly by functioning as a guanine nucleotide exchange factor (GEF) for RAB5A, by exchanging bound GDP for free GTP, and facilitating Ras-activated receptor endocytosis. The chain is Ras and Rab interactor 1 (RIN1) from Homo sapiens (Human).